A 138-amino-acid chain; its full sequence is Basic phospholipase A2 homolog 7 (138 aa).

A signal peptide spans Met1–Gly16. 6 disulfide bridges follow: Cys42-Cys131, Cys44-Cys60, Cys59-Cys111, Cys65-Cys138, Cys66-Cys104, and Cys91-Cys102. The tract at residues Lys121–Lys133 is important for membrane-damaging activities in eukaryotes and bacteria; heparin-binding.

It belongs to the phospholipase A2 family. Group II subfamily. K49 sub-subfamily. In terms of tissue distribution, expressed by the venom gland.

It is found in the secreted. Snake venom phospholipase A2 homolog that lacks enzymatic activity. Is myotoxic and displays edema-inducing activities. A model of myotoxic mechanism has been proposed: an apo Lys49-PLA2 is activated by the entrance of a hydrophobic molecule (e.g. fatty acid) at the hydrophobic channel of the protein leading to a reorientation of a monomer. This reorientation causes a transition between 'inactive' to 'active' states, causing alignment of C-terminal and membrane-docking sites (MDoS) side-by-side and putting the membrane-disruption sites (MDiS) in the same plane, exposed to solvent and in a symmetric position for both monomers. The MDoS region stabilizes the toxin on membrane by the interaction of charged residues with phospholipid head groups. Subsequently, the MDiS region destabilizes the membrane with penetration of hydrophobic residues. This insertion causes a disorganization of the membrane, allowing an uncontrolled influx of ions (i.e. calcium and sodium), and eventually triggering irreversible intracellular alterations and cell death. The protein is Basic phospholipase A2 homolog 7 of Craspedocephalus gramineus (Bamboo pit viper).